Here is a 538-residue protein sequence, read N- to C-terminus: MTDLNKLVKELNDLGLTDVKEIVYNPSYEQLFEEETKPGLEGFDKGTLTTLGAVAVDTGIFTGRSPKDKYIVCDETTKDTVWWNSEAAKNDNKPMTQETWKSLRELVAKQLSGKRLFVVEGYCGASEKHRIGVRMVTEVAWQAHFVKNMFIRPTDEELKNFKADFTVLNGAKCTNPNWKEQGLNSENFVAFNITEGIQLIGGTWYGGEMKKGMFSMMNYFLPLKGVASMHCSANVGKDGDVAIFFGLSGTGKTTLSTDPKRQLIGDDEHGWDESGVFNFEGGCYAKTINLSQENEPDIYGAIRRDALLENVVVRADGSVDFDDGSKTENTRVSYPIYHIDNIVRPVSKAGHATKVIFLTADAFGVLPPVSKLTPEQTEYYFLSGFTAKLAGTERGVTEPTPTFSACFGAAFLSLHPIQYADVLVERMKASGAEAYLVNTGWNGTGKRISIKDTRGIIDAILDGSIEKAEMGELPIFNLAIPKALPGVDPAILDPRDTYADKAQWQVKAEDLANRFVKNFVKYTANPEAAKLVGAGPKA.

Arginine 64 provides a ligand contact to substrate. An ATP-binding site is contributed by arginine 152. Substrate-binding residues include tyrosine 205 and lysine 211. Residues lysine 211, histidine 230, and 246-254 (GLSGTGKTT) each bind ATP. Mn(2+) contacts are provided by lysine 211 and histidine 230. Position 267 (aspartate 267) interacts with Mn(2+). Residues glutamate 295, arginine 331, arginine 344, 447–448 (RI), and threonine 453 each bind ATP. A substrate-binding site is contributed by arginine 331.

It belongs to the phosphoenolpyruvate carboxykinase (ATP) family. As to quaternary structure, monomer. Mn(2+) serves as cofactor.

The protein resides in the cytoplasm. The catalysed reaction is oxaloacetate + ATP = phosphoenolpyruvate + ADP + CO2. The protein operates within carbohydrate biosynthesis; gluconeogenesis. In terms of biological role, involved in gluconeogenesis. Catalyzes the conversion of oxaloacetate (OAA) to phosphoenolpyruvate (PEP) through direct phosphoryl transfer between the nucleoside triphosphate and OAA. This Actinobacillus succinogenes (strain ATCC 55618 / DSM 22257 / CCUG 43843 / 130Z) protein is Phosphoenolpyruvate carboxykinase (ATP).